Consider the following 479-residue polypeptide: U6 small nuclear RNA (adenine-(43)-N(6))-methyltransferase (479 aa).

Residues K82, G108, D131, T164, and N184 each contribute to the S-adenosyl-L-methionine site. Positions 420-424 are involved in dlc-1 binding; sequence DNASQ.

Belongs to the methyltransferase superfamily. METTL16/RlmF family. As to quaternary structure, self-associates. Interacts with dlc-1; the interaction is direct, and is required for nuclear localization of mett-10. In terms of tissue distribution, expressed in the intestine, vulva, and cells of the somatic gonad including distal tip cells, gonadal sheath cells and spermatheca.

The protein resides in the nucleus. It carries out the reaction an adenosine in mRNA + S-adenosyl-L-methionine = an N(6)-methyladenosine in mRNA + S-adenosyl-L-homocysteine + H(+). It catalyses the reaction adenosine in U6 snRNA + S-adenosyl-L-methionine = N(6)-methyladenosine in U6 snRNA + S-adenosyl-L-homocysteine + H(+). Functionally, RNA N6-methyltransferase that methylates adenosine residues at the N(6) position of a subset of RNAs and is involved in S-adenosyl-L-methionine homeostasis by regulating splicing of S-adenosylmethionine synthase transcripts (sams-3, sams-4 and sams-5). Able to N6-methylate a subset of mRNAs containing the 5'UACAGAAAC-3' nonamer sequence. Plays a key role in S-adenosyl-L-methionine homeostasis: under rich-diet conditions, catalyzes N6-methylation of S-adenosylmethionine synthase mRNAs (sams-3, sams-4 and sams-5), directly inhibiting splicing and protein production of S-adenosylmethionine synthase. In addition to mRNAs, also able to mediate N6-methylation of U6 small nuclear RNA (U6 snRNA). Required for gamete production, inhibiting germ cell proliferative fate and ensuring germ cell meiotic development. Also promotes progression of the mitotic cell cycle in those germ cells that continue to proliferate. Plays a role in the development of the vulva, somatic gonad and embryo. The protein is U6 small nuclear RNA (adenine-(43)-N(6))-methyltransferase of Caenorhabditis elegans.